A 183-amino-acid polypeptide reads, in one-letter code: Ribosome maturation factor RimM (183 aa).

Residues 103-183 (EEGDYYWKDL…SIEVDWDPGF (81 aa)) form the PRC barrel domain.

The protein belongs to the RimM family. As to quaternary structure, binds ribosomal protein uS19.

It localises to the cytoplasm. Its function is as follows. An accessory protein needed during the final step in the assembly of 30S ribosomal subunit, possibly for assembly of the head region. Essential for efficient processing of 16S rRNA. May be needed both before and after RbfA during the maturation of 16S rRNA. It has affinity for free ribosomal 30S subunits but not for 70S ribosomes. This Escherichia coli O157:H7 (strain EC4115 / EHEC) protein is Ribosome maturation factor RimM.